A 225-amino-acid polypeptide reads, in one-letter code: Translation initiation factor 6 (225 aa).

This sequence belongs to the eIF-6 family.

In terms of biological role, binds to the 50S ribosomal subunit and prevents its association with the 30S ribosomal subunit to form the 70S initiation complex. The protein is Translation initiation factor 6 of Hyperthermus butylicus (strain DSM 5456 / JCM 9403 / PLM1-5).